The following is a 167-amino-acid chain: Putative lipoprotein YteS (167 aa).

Positions 1–20 (MTKRIRTALCVIVSVLFLAS) are cleaved as a signal peptide. A lipid anchor (N-palmitoyl cysteine) is attached at Cys21. Cys21 is lipidated: S-diacylglycerol cysteine.

Its subcellular location is the cell membrane. In terms of biological role, may play a role in the degradation of type I rhamnogalacturonan derived from plant cell walls. This chain is Putative lipoprotein YteS (yteS), found in Bacillus subtilis (strain 168).